Consider the following 963-residue polypeptide: Bifunctional glutamine synthetase adenylyltransferase/adenylyl-removing enzyme (963 aa).

Positions 1-451 (MAAPSELQLY…EHFADIIAER (451 aa)) are adenylyl removase. Positions 461–963 (TIEWKALWAG…VAFWEKVFAE (503 aa)) are adenylyl transferase.

Belongs to the GlnE family. Mg(2+) is required as a cofactor.

The catalysed reaction is [glutamine synthetase]-O(4)-(5'-adenylyl)-L-tyrosine + phosphate = [glutamine synthetase]-L-tyrosine + ADP. The enzyme catalyses [glutamine synthetase]-L-tyrosine + ATP = [glutamine synthetase]-O(4)-(5'-adenylyl)-L-tyrosine + diphosphate. Involved in the regulation of glutamine synthetase GlnA, a key enzyme in the process to assimilate ammonia. When cellular nitrogen levels are high, the C-terminal adenylyl transferase (AT) inactivates GlnA by covalent transfer of an adenylyl group from ATP to specific tyrosine residue of GlnA, thus reducing its activity. Conversely, when nitrogen levels are low, the N-terminal adenylyl removase (AR) activates GlnA by removing the adenylyl group by phosphorolysis, increasing its activity. The regulatory region of GlnE binds the signal transduction protein PII (GlnB) which indicates the nitrogen status of the cell. This is Bifunctional glutamine synthetase adenylyltransferase/adenylyl-removing enzyme from Hahella chejuensis (strain KCTC 2396).